The primary structure comprises 322 residues: Putative membrane-bound redox modulator Alx (322 aa).

Over 1–6 the chain is Periplasmic; it reads MNTVGT. The chain crosses the membrane as a helical span at residues 7–27; sequence PLLWGGFAVVVVIMLSIDLLL. Residues 28 to 43 lie on the Cytoplasmic side of the membrane; sequence QGRRGAHAMSMKQAAG. The chain crosses the membrane as a helical span at residues 44–64; it reads WSILWVTLSLLFNAAFWWYLA. The Periplasmic portion of the chain corresponds to 65–89; it reads ETQGREVADPQALAFLTGYLIEKSL. The helical transmembrane segment at 90–110 threads the bilayer; sequence AVDNVFVWLMLFSYFSVPPAL. The Cytoplasmic portion of the chain corresponds to 111 to 113; it reads QRR. The helical transmembrane segment at 114-134 threads the bilayer; the sequence is VLVYGVLGAIVLRTIMIFAGT. Position 135 (Trp-135) is a topological domain, periplasmic. The chain crosses the membrane as a helical span at residues 136-156; the sequence is LITQFEWLLYVFGAFLLFTGV. Residues 157–198 are Cytoplasmic-facing; it reads KMALAKEDESGIGEKPMVRWLRGHLRMTDTIENEHFFVRKNG. A helical transmembrane segment spans residues 199–219; that stretch reads LLYATPLLLVLIMVEFSDVIF. At 220–225 the chain is on the periplasmic side; it reads AVDSIP. The chain crosses the membrane as a helical span at residues 226–246; sequence AIFAVTTDPFIVLTSNLFAIL. The Cytoplasmic portion of the chain corresponds to 247 to 261; that stretch reads GLRAMYFLLSGVAER. Residues 262-282 traverse the membrane as a helical segment; that stretch reads FSMLKYGLAVILVFIGIKMLI. Residues 283 to 286 lie on the Periplasmic side of the membrane; sequence VDFY. Residues 287–307 form a helical membrane-spanning segment; the sequence is HIPIAISLGVVFGILTITLVI. The Cytoplasmic portion of the chain corresponds to 308-321; that stretch reads NTWVNHQRDKKLRA.

The protein belongs to the TerC family.

Its subcellular location is the cell inner membrane. In terms of biological role, has been proposed to be a redox modulator. The sequence is that of Putative membrane-bound redox modulator Alx (alx) from Salmonella typhi.